Reading from the N-terminus, the 186-residue chain is ATP synthase subunit b (186 aa).

A helical membrane pass occupies residues 5–25; the sequence is LILNLLVLLAPAAVFAAGGGH.

This sequence belongs to the ATPase B chain family. In terms of assembly, F-type ATPases have 2 components, F(1) - the catalytic core - and F(0) - the membrane proton channel. F(1) has five subunits: alpha(3), beta(3), gamma(1), delta(1), epsilon(1). F(0) has three main subunits: a(1), b(2) and c(10-14). The alpha and beta chains form an alternating ring which encloses part of the gamma chain. F(1) is attached to F(0) by a central stalk formed by the gamma and epsilon chains, while a peripheral stalk is formed by the delta and b chains.

Its subcellular location is the cell inner membrane. Functionally, f(1)F(0) ATP synthase produces ATP from ADP in the presence of a proton or sodium gradient. F-type ATPases consist of two structural domains, F(1) containing the extramembraneous catalytic core and F(0) containing the membrane proton channel, linked together by a central stalk and a peripheral stalk. During catalysis, ATP synthesis in the catalytic domain of F(1) is coupled via a rotary mechanism of the central stalk subunits to proton translocation. Its function is as follows. Component of the F(0) channel, it forms part of the peripheral stalk, linking F(1) to F(0). In Bdellovibrio bacteriovorus (strain ATCC 15356 / DSM 50701 / NCIMB 9529 / HD100), this protein is ATP synthase subunit b.